The chain runs to 545 residues: MAKDILFSEEARRAMLRGVDALADAVKVTIGPKGRNVVLERKFGSPLITNDGVTIAKEIELEDHFENMGAKLVAEVASKTNEIAGDGTTTATVLAQAMIREGLKNVTAGANPMVIRKGIEKAVRRAVEELHAIAKPIEGKEAIAQVAAISAADEEVGQLIAEAMERVGQDGVITIEESRGFTTELDVVEGMQFDRGYASPYMITDSDKMEAVLENPYILITDKKISNIQEILPVLEQVVQQNKPLLIIAEDVEGEALATLVVNKLRGTFNAVAVKAPGFGDRRKAMLEDISIVTGAELITEELGLDLKETQITQLGRASKVVVSKDNTTIVEGNGHSDSITARVGAIRSQIEETTSDFDREKLQERLAKLAGGVAVVKVGAATETELKERKLRIEDALNATRAAVEEGIVAGGGTAFIHVTKAVESILAVTTGDEATGVNIVLRALEAPLRQIAENAGQEGSVIVERLKHEAQGMGYNAATDEYVDMIETGIVDPAKVTRSALQNAASVSAMFLTTEAVIADKPEPAGAPAMPDMGGMGGMGGMM.

ATP contacts are provided by residues T29–P32, D86–T90, G413, N478–A480, and D494.

The protein belongs to the chaperonin (HSP60) family. In terms of assembly, forms a cylinder of 14 subunits composed of two heptameric rings stacked back-to-back. Interacts with the co-chaperonin GroES.

The protein localises to the cytoplasm. The enzyme catalyses ATP + H2O + a folded polypeptide = ADP + phosphate + an unfolded polypeptide.. Its function is as follows. Together with its co-chaperonin GroES, plays an essential role in assisting protein folding. The GroEL-GroES system forms a nano-cage that allows encapsulation of the non-native substrate proteins and provides a physical environment optimized to promote and accelerate protein folding. The protein is Chaperonin GroEL of Exiguobacterium sibiricum (strain DSM 17290 / CCUG 55495 / CIP 109462 / JCM 13490 / 255-15).